We begin with the raw amino-acid sequence, 761 residues long: Subtilisin-like protease SBT3.15 (761 aa).

The N-terminal stretch at 1-21 is a signal peptide; that stretch reads MENSFLSSKLVFLLAIALVLF. Residues 22-120 constitute a propeptide, activation peptide; the sequence is LNTELSFLTA…VIPNRILKLK (99 aa). In terms of domain architecture, Inhibitor I9 spans 41-119; that stretch reads VYIVYLGQRE…HVIPNRILKL (79 aa). The Peptidase S8 domain maps to 134-613; sequence PTSFSSSSSA…GGLVNPEKAA (480 aa). N-linked (GlcNAc...) asparagine glycosylation is present at asparagine 151. Residue aspartate 164 is the Charge relay system of the active site. The N-linked (GlcNAc...) asparagine glycan is linked to asparagine 197. Histidine 241 functions as the Charge relay system in the catalytic mechanism. N-linked (GlcNAc...) asparagine glycans are attached at residues asparagine 256 and asparagine 384. Catalysis depends on serine 544, which acts as the Charge relay system. Asparagine 636 carries an N-linked (GlcNAc...) asparagine glycan.

It belongs to the peptidase S8 family.

The protein localises to the secreted. The chain is Subtilisin-like protease SBT3.15 from Arabidopsis thaliana (Mouse-ear cress).